The primary structure comprises 322 residues: NADH-cytochrome b5 reductase 2 (322 aa).

The chain crosses the membrane as a helical span at residues 30 to 46 (LAPVYVAVGLAGLGVGL). The FAD-binding FR-type domain occupies 71 to 176 (QGWVNLKLSD…KGPLPKYPWE (106 aa)). Position 179 to 214 (179 to 214 (KHKHICLVAGGTGITPMYQLAREIFKNPEDKTKVTL)) interacts with FAD.

This sequence belongs to the flavoprotein pyridine nucleotide cytochrome reductase family. FAD serves as cofactor.

It localises to the mitochondrion outer membrane. The catalysed reaction is 2 Fe(III)-[cytochrome b5] + NADH = 2 Fe(II)-[cytochrome b5] + NAD(+) + H(+). May mediate the reduction of outer membrane cytochrome b5. This is NADH-cytochrome b5 reductase 2 (mcr1) from Emericella nidulans (strain FGSC A4 / ATCC 38163 / CBS 112.46 / NRRL 194 / M139) (Aspergillus nidulans).